The chain runs to 72 residues: Heat-stable enterotoxin C (72 aa).

Residues 1-19 (MKKIVFVLTLMLFSFGTLG) form the signal peptide. 3 disulfide bridges follow: cysteine 60/cysteine 65, cysteine 61/cysteine 69, and cysteine 64/cysteine 72.

Belongs to the heat-stable enterotoxin family.

Its subcellular location is the secreted. In terms of biological role, toxin which activates the particulate form of guanylate cyclase and increases cyclic GMP levels within the host intestinal epithelial cells. Highly toxic. In Yersinia enterocolitica, this protein is Heat-stable enterotoxin C (ystC).